The sequence spans 93 residues: Integration host factor subunit beta (93 aa).

This sequence belongs to the bacterial histone-like protein family. Heterodimer of an alpha and a beta chain.

Functionally, this protein is one of the two subunits of integration host factor, a specific DNA-binding protein that functions in genetic recombination as well as in transcriptional and translational control. The sequence is that of Integration host factor subunit beta from Vibrio vulnificus (strain YJ016).